Reading from the N-terminus, the 447-residue chain is Phosphoglucosamine mutase (447 aa).

The Phosphoserine intermediate role is filled by Ser-102. Mg(2+)-binding residues include Ser-102, Asp-241, Asp-243, and Asp-245. Residue Ser-102 is modified to Phosphoserine.

It belongs to the phosphohexose mutase family. Requires Mg(2+) as cofactor. In terms of processing, activated by phosphorylation.

The catalysed reaction is alpha-D-glucosamine 1-phosphate = D-glucosamine 6-phosphate. Functionally, catalyzes the conversion of glucosamine-6-phosphate to glucosamine-1-phosphate. The chain is Phosphoglucosamine mutase from Symbiobacterium thermophilum (strain DSM 24528 / JCM 14929 / IAM 14863 / T).